Consider the following 455-residue polypeptide: Bifunctional protein GlmU (455 aa).

Residues 1–226 form a pyrophosphorylase region; it reads MGLSVVILAA…EFEILGVNDR (226 aa). Residues 8 to 11, Lys-22, Gln-73, 78 to 79, 99 to 101, Gly-136, Glu-151, Asn-166, and Asn-224 contribute to the UDP-N-acetyl-alpha-D-glucosamine site; these read LAAG, GT, and YGD. Asp-101 is a Mg(2+) binding site. Asn-224 is a binding site for Mg(2+). The linker stretch occupies residues 227-247; that stretch reads TQLASLERVWQRNVAEKIMAK. The interval 248–455 is N-acetyltransferase; sequence GVSIADPNRF…WQRSVKKTDK (208 aa). UDP-N-acetyl-alpha-D-glucosamine contacts are provided by Arg-330 and Lys-348. Catalysis depends on His-360, which acts as the Proton acceptor. Positions 363 and 374 each coordinate UDP-N-acetyl-alpha-D-glucosamine. Acetyl-CoA-binding positions include Ala-377, 383–384, Ser-402, Ala-420, and Arg-437; that span reads NY.

It in the N-terminal section; belongs to the N-acetylglucosamine-1-phosphate uridyltransferase family. In the C-terminal section; belongs to the transferase hexapeptide repeat family. As to quaternary structure, homotrimer. Mg(2+) serves as cofactor.

It localises to the cytoplasm. The enzyme catalyses alpha-D-glucosamine 1-phosphate + acetyl-CoA = N-acetyl-alpha-D-glucosamine 1-phosphate + CoA + H(+). The catalysed reaction is N-acetyl-alpha-D-glucosamine 1-phosphate + UTP + H(+) = UDP-N-acetyl-alpha-D-glucosamine + diphosphate. Its pathway is nucleotide-sugar biosynthesis; UDP-N-acetyl-alpha-D-glucosamine biosynthesis; N-acetyl-alpha-D-glucosamine 1-phosphate from alpha-D-glucosamine 6-phosphate (route II): step 2/2. The protein operates within nucleotide-sugar biosynthesis; UDP-N-acetyl-alpha-D-glucosamine biosynthesis; UDP-N-acetyl-alpha-D-glucosamine from N-acetyl-alpha-D-glucosamine 1-phosphate: step 1/1. It participates in bacterial outer membrane biogenesis; LPS lipid A biosynthesis. Catalyzes the last two sequential reactions in the de novo biosynthetic pathway for UDP-N-acetylglucosamine (UDP-GlcNAc). The C-terminal domain catalyzes the transfer of acetyl group from acetyl coenzyme A to glucosamine-1-phosphate (GlcN-1-P) to produce N-acetylglucosamine-1-phosphate (GlcNAc-1-P), which is converted into UDP-GlcNAc by the transfer of uridine 5-monophosphate (from uridine 5-triphosphate), a reaction catalyzed by the N-terminal domain. In Francisella tularensis subsp. tularensis (strain FSC 198), this protein is Bifunctional protein GlmU.